Consider the following 200-residue polypeptide: Ciliary microtubule inner protein 2C (200 aa).

It belongs to the CIMIP2 family. Microtubule inner protein component of sperm flagellar doublet microtubules.

Its subcellular location is the cytoplasm. The protein resides in the cytoskeleton. The protein localises to the cilium axoneme. It localises to the flagellum axoneme. In terms of biological role, microtubule inner protein (MIP) part of the dynein-decorated doublet microtubules (DMTs) in cilia axoneme, which is required for motile cilia beating. Binds to the intra-tubulin interfaces. This is Ciliary microtubule inner protein 2C (Cimip2c) from Mus musculus (Mouse).